Reading from the N-terminus, the 247-residue chain is 5-oxoprolinase subunit A (247 aa).

The protein belongs to the LamB/PxpA family. Forms a complex composed of PxpA, PxpB and PxpC.

The enzyme catalyses 5-oxo-L-proline + ATP + 2 H2O = L-glutamate + ADP + phosphate + H(+). Catalyzes the cleavage of 5-oxoproline to form L-glutamate coupled to the hydrolysis of ATP to ADP and inorganic phosphate. The chain is 5-oxoprolinase subunit A from Ralstonia pickettii (strain 12J).